The following is a 433-amino-acid chain: Acetyl-CoA acetyltransferase erg10A, mitochondrial (433 aa).

A mitochondrion-targeting transit peptide spans 1-34 (MAIQTTTGLAARLVAKRATFPASRRNFSASRSAL). Cys-124 serves as the catalytic Acyl-thioester intermediate. Tyr-219 is a binding site for K(+). CoA contacts are provided by Asn-229 and Lys-262. Ala-280 serves as a coordination point for K(+). Ser-284 serves as a coordination point for CoA. Residues His-387 and Cys-415 each act as proton acceptor in the active site. Residue Asn-416 coordinates chloride.

It belongs to the thiolase-like superfamily. Thiolase family. Homotetramer. K(+) serves as cofactor.

The protein localises to the mitochondrion. The enzyme catalyses 2 acetyl-CoA = acetoacetyl-CoA + CoA. The protein operates within metabolic intermediate biosynthesis; (R)-mevalonate biosynthesis; (R)-mevalonate from acetyl-CoA: step 1/3. Mitochondrial acetyl-CoA acetyltransferase that catalyzes both the formation and degradation of acetoacetyl-CoA. Has no overlapping function with erg10B and seems not to be involved in ergosterol biosynthesis. Plays an important role in growth, morphogenesis and maintaining mitochondrial function including the response to oxidative stresses. The polypeptide is Acetyl-CoA acetyltransferase erg10A, mitochondrial (Aspergillus fumigatus (strain ATCC MYA-4609 / CBS 101355 / FGSC A1100 / Af293) (Neosartorya fumigata)).